A 563-amino-acid polypeptide reads, in one-letter code: Chaperonin GroEL 1 (563 aa).

ATP contacts are provided by residues 29-32 (TIGP), 86-90 (DGTTT), Gly413, and Asp492. The interval 520–541 (DKPEPPSAPGAEGGDPMGGMGG) is disordered. The span at 530–541 (AEGGDPMGGMGG) shows a compositional bias: gly residues.

It belongs to the chaperonin (HSP60) family. Forms a cylinder of 14 subunits composed of two heptameric rings stacked back-to-back. Interacts with the co-chaperonin GroES.

The protein localises to the cytoplasm. The enzyme catalyses ATP + H2O + a folded polypeptide = ADP + phosphate + an unfolded polypeptide.. In terms of biological role, together with its co-chaperonin GroES, plays an essential role in assisting protein folding. The GroEL-GroES system forms a nano-cage that allows encapsulation of the non-native substrate proteins and provides a physical environment optimized to promote and accelerate protein folding. This Prochlorococcus marinus (strain NATL1A) protein is Chaperonin GroEL 1.